A 377-amino-acid polypeptide reads, in one-letter code: MERYIIKDGKKLRYGYTTGSCATAASKAAAQMLLQPGEVHEVDIDTPKGWSLKLKVEDIQRSHGAVSCAIIKDAGDDPDVTNKLAIYSKLIWRQDTKIEIHGGEGVGTVTRPGLQIPVGKPAINPIPLQMIEREVREVIGPGRGVDIVISVPKGQEVAKKTFNPKLGIQGGISILGTSGIVEPMSEEAMKDSLALELPMAKAEKIKTFVFVPGNYGRDMAREKYKIHDKNMIKISNFVGFMMDQSVIQNVERILIIGHIGKLVKVAGGIFHTHSKVADGRREILAAHLAALGASQQLVLRVLESNTTEEAVGLIQEKGFDRLFSHLADKITEKCVERTQGNIEIGTIIFSMEQGVLAHCSQAGRLLEILKSEGVKDE.

It belongs to the CbiD family.

The catalysed reaction is Co-precorrin-5B + S-adenosyl-L-methionine = Co-precorrin-6A + S-adenosyl-L-homocysteine. Its pathway is cofactor biosynthesis; adenosylcobalamin biosynthesis; cob(II)yrinate a,c-diamide from sirohydrochlorin (anaerobic route): step 6/10. Its function is as follows. Catalyzes the methylation of C-1 in cobalt-precorrin-5B to form cobalt-precorrin-6A. The sequence is that of Cobalt-precorrin-5B C(1)-methyltransferase from Alkaliphilus metalliredigens (strain QYMF).